A 134-amino-acid polypeptide reads, in one-letter code: Transcription antitermination protein NusB (134 aa).

This sequence belongs to the NusB family.

Its function is as follows. Involved in transcription antitermination. Required for transcription of ribosomal RNA (rRNA) genes. Binds specifically to the boxA antiterminator sequence of the ribosomal RNA (rrn) operons. In Shewanella oneidensis (strain ATCC 700550 / JCM 31522 / CIP 106686 / LMG 19005 / NCIMB 14063 / MR-1), this protein is Transcription antitermination protein NusB.